Here is a 96-residue protein sequence, read N- to C-terminus: Protein transport protein Sec61 subunit beta (96 aa).

Residues 1 to 17 (MPGPTPSGTNVGSSGRS) show a composition bias toward polar residues. Residues 1–54 (MPGPTPSGTNVGSSGRSPSKAVAARAAGSTVRQRKNASCGTRSAGRTTSAGTGG) are disordered. Pro-2 carries the post-translational modification N-acetylproline. Topologically, residues 2–70 (PGPTPSGTNV…EDSPGLKVGP (69 aa)) are cytoplasmic. Ser-7 bears the Phosphoserine mark. Thr-9 is subject to Phosphothreonine. Phosphoserine is present on residues Ser-13, Ser-14, and Ser-17. A lipid anchor (S-palmitoyl cysteine) is attached at Cys-39. Residues 40 to 50 (GTRSAGRTTSA) are compositionally biased toward low complexity. A helical membrane pass occupies residues 71-91 (VPVLVMSLLFIAAVFMLHIWG).

Belongs to the SEC61-beta family. In terms of assembly, the SEC61 channel-forming translocon complex consists of channel-forming core components SEC61A1, SEC61B and SEC61G and different auxiliary components such as SEC62 and SEC63. The SEC61 channel associates with the multi-pass translocon (MPT) complex. Interacts with TRAM1.

It is found in the endoplasmic reticulum membrane. In terms of biological role, component of SEC61 channel-forming translocon complex that mediates transport of signal peptide-containing precursor polypeptides across the endoplasmic reticulum (ER). Forms a ribosome receptor and a gated pore in the ER membrane, both functions required for cotranslational translocation of nascent polypeptides. The SEC61 channel is also involved in ER membrane insertion of transmembrane proteins: it mediates membrane insertion of the first few transmembrane segments of proteins, while insertion of subsequent transmembrane regions of multi-pass membrane proteins is mediated by the multi-pass translocon (MPT) complex. The SEC61 channel cooperates with the translocating protein TRAM1 to import nascent proteins into the ER. Required for PKD1/Polycystin-1 biogenesis. The polypeptide is Protein transport protein Sec61 subunit beta (Mus musculus (Mouse)).